A 128-amino-acid polypeptide reads, in one-letter code: MSKTIVLSVGEATRTLTEIQSTADRQIFEEKVGPLVGRLRLTASLRQNGAKTAYRVNLKLDQADVVDCSTSVCGELPKVRYTQVWSHDVTIVANSTEASRKSLYDLTKSLVATSQVEDLVVNLVPLGR.

The RNA site is built by Arg-40, Arg-46, Ala-53, Arg-55, Lys-59, Asp-61, Val-84, Ser-86, and Thr-90.

It belongs to the Leviviricetes capsid protein family. As to quaternary structure, homodimer. The dimers in the capsid are covalently linked with disulfide bridges. The homodimers binds to the viral RNA via an operator hairpin, but also to many other RNA sequences in the viral genome; this interaction probably shifts the virus from the replicative to the assembly phase and ensures specific encapsidation of the viral genome.

It is found in the virion. Functionally, capsid protein self-assembles to form an icosahedral capsid with a T=3 symmetry, about 26 nm in diameter, and consisting of 89 capsid proteins dimers (178 capsid proteins). Involved in viral genome encapsidation through the interaction between a capsid protein dimer and the multiple packaging signals present in the RNA genome. Its function is as follows. Acts as a translational repressor of viral replicase synthesis late in infection. This latter function is the result of capsid protein interaction with an RNA hairpin which contains the replicase ribosome-binding site. The sequence is that of Capsid protein from Pseudomonas aeruginosa (Bacteriophage PP7).